A 209-amino-acid chain; its full sequence is Ribonuclease HII (209 aa).

The 192-residue stretch at 18–209 (GLVAGVDEVG…FKPVKALLER (192 aa)) folds into the RNase H type-2 domain. A divalent metal cation contacts are provided by aspartate 24, glutamate 25, and aspartate 116.

This sequence belongs to the RNase HII family. Requires Mn(2+) as cofactor. The cofactor is Mg(2+).

The protein resides in the cytoplasm. The catalysed reaction is Endonucleolytic cleavage to 5'-phosphomonoester.. Functionally, endonuclease that specifically degrades the RNA of RNA-DNA hybrids. This Shewanella sp. (strain ANA-3) protein is Ribonuclease HII.